Here is a 1390-residue protein sequence, read N- to C-terminus: Nuclear pore complex protein 14 (1390 aa).

2 stretches are compositionally biased toward polar residues: residues 434-455 (SQKPISAPPSDQTPVTKPSTVF) and 464-521 (LKSS…STPK). 3 disordered regions span residues 434-530 (SQKP…KISD), 851-874 (PSSSLFSASPSTPSTKSDAATQAD), and 985-1118 (QEIE…SKAA). Residues 851–864 (PSSSLFSASPSTPS) show a composition bias toward low complexity. The segment covering 986–1033 (EIEKASSKVETLNKTEEVKDEKSENEVTPDLKSEEPKSLETKVKEEPK) has biased composition (basic and acidic residues). A compositionally biased stretch (low complexity) spans 1051 to 1071 (KTPSFSFNSTTTPKSTSSTSS). Residues 1073 to 1074 (FG) form repeat 1. Residues 1073–1373 (FGGGLKTQTP…TPAPTSSVFG (301 aa)) are 17 X 2 AA repeats of F-G. The segment covering 1078–1090 (KTQTPSSSNSTNI) has biased composition (polar residues). Repeat unit 2 spans residues 1091–1092 (FG). Residues 1095–1109 (TTTTATPTPASNTSS) are compositionally biased toward low complexity. Repeat copies occupy residues 1111–1112 (FG), 1122–1123 (FG), 1125–1126 (FG), 1163–1164 (FG), 1166–1167 (FG), and 1178–1179 (FG). Positions 1183–1280 (TAPTVPNVDD…QASAPATGTS (98 aa)) are disordered. Gly residues predominate over residues 1201 to 1210 (NGGGSGGFMS). The segment covering 1231–1243 (TSTGTSASSSSWL) has biased composition (low complexity). Residues 1244–1245 (FG) form repeat 9. Positions 1264-1280 (TAGSSAQQASAPATGTS) are enriched in low complexity. 8 repeat units span residues 1283 to 1284 (FG), 1289 to 1290 (FG), 1295 to 1296 (FG), 1300 to 1301 (FG), 1315 to 1316 (FG), 1344 to 1345 (FG), 1357 to 1358 (FG), and 1372 to 1373 (FG). Positions 1342 to 1371 (SLFGGGATPQTNTSIFGGGANTTPAPTSSV) are enriched in polar residues. Residues 1342 to 1390 (SLFGGGATPQTNTSIFGGGANTTPAPTSSVFGGGASANANKPTSFTSWR) are disordered. Residues 1378-1390 (ANANKPTSFTSWR) are compositionally biased toward polar residues.

In terms of assembly, interacts with caspase ced-3 (via propeptide); the interaction tethers ced-3 to the nuclear membrane and prevents its autoprocessing in absence of ced-4.

The protein localises to the nucleus. The protein resides in the nuclear pore complex. It is found in the nucleus membrane. May serve as a docking site in the receptor-mediated import of substrates across the nuclear pore complex. Plays a role in apoptosis by tethering caspase ced-3 to the nuclear membrane preventing its autoprocessing in absence of ced-4. The polypeptide is Nuclear pore complex protein 14 (Caenorhabditis elegans).